A 220-amino-acid chain; its full sequence is uncharacterized protein (220 aa).

A run of 7 helical transmembrane segments spans residues 6–26 (FSIL…LIVW), 33–53 (IVRL…LRGI), 59–79 (ALIA…PWLL), 103–123 (LLIT…VVNL), 126–146 (GVTI…LFVM), 157–177 (AGFL…TAGV), and 179–199 (LIVE…IGVL).

It localises to the cell membrane. This is an uncharacterized protein from Mycobacterium tuberculosis (strain ATCC 25618 / H37Rv).